A 135-amino-acid polypeptide reads, in one-letter code: Large ribosomal subunit protein uL22 (135 aa).

Residues 112-135 form a disordered region; that stretch reads KKPEKKKLKAKSAKTEEAPKAAEV. A compositionally biased stretch (basic and acidic residues) spans 124-135; it reads AKTEEAPKAAEV.

This sequence belongs to the universal ribosomal protein uL22 family. In terms of assembly, part of the 50S ribosomal subunit.

Functionally, this protein binds specifically to 23S rRNA; its binding is stimulated by other ribosomal proteins, e.g. L4, L17, and L20. It is important during the early stages of 50S assembly. It makes multiple contacts with different domains of the 23S rRNA in the assembled 50S subunit and ribosome. The globular domain of the protein is located near the polypeptide exit tunnel on the outside of the subunit, while an extended beta-hairpin is found that lines the wall of the exit tunnel in the center of the 70S ribosome. The chain is Large ribosomal subunit protein uL22 from Brachyspira hyodysenteriae (strain ATCC 49526 / WA1).